The primary structure comprises 592 residues: MNPYEWLETILFFVVLLALIKPFGTYMAKVFQGERTLLSPVFVPCENLLYRICGVDKDDEMGWKRYACAMLLFNLVFAVSLFAMLLLQGILPLNPQKLPAFSWPLALNTAISFTTNTNWQNYGGEAAASYFTQMFGFAVHNFTSAATGIVIAIAAIRGLVRRKSSALGNFWVDTTRCTLYILLPLSLIAAIFLVSQGVIQNFSPYKTVPLVQATSFEKPRLDAKGTPIKDAKGNPVTESVTVKEVTIPMGPVASQEAIKELGTNGGGFFNANSAHPFENPTPLSNIFEVFLILLISGGLTYTFGRMAGNTRQGWALLAVMLAILILAIGVFYRAESSGNPLVAKLGVHGINMEGKETRFGLAGSALFATATTGTSCGAVNTMHDSLTPIGGMVPLSLILLSEVIFGGVGTGLYTMLAFVVIAVFVAGLMIGRTPEYLGKKIEVREMWMSITTVLASGILVLIFSGIAMILPAGVSSMNNSGAHGLSEVLYAFASMSNNNGSAFAGLNGNTLFYNLTGAVAMLLGRFVPAVAVLAMAGGLAEKKYVPPSLGTLPTDQAPFALWLTLVILIVGALTFFPALAMGPIAEQLIMMR.

13 consecutive transmembrane segments (helical) span residues 6–26 (WLET…FGTY), 67–87 (ACAM…MLLL), 136–156 (GFAV…IAAI), 179–199 (LYIL…QGVI), 283–303 (LSNI…TYTF), 312–332 (QGWA…GVFY), 359–379 (FGLA…CGAV), 389–409 (IGGM…GGVG), 411–431 (GLYT…LMIG), 450–470 (ITTV…AMIL), 489–511 (LYAF…GNTL), 519–539 (VAML…AGGL), and 559–579 (FALW…FPAL).

Belongs to the KdpA family. As to quaternary structure, the system is composed of three essential subunits: KdpA, KdpB and KdpC.

The protein resides in the cell inner membrane. Its function is as follows. Part of the high-affinity ATP-driven potassium transport (or Kdp) system, which catalyzes the hydrolysis of ATP coupled with the electrogenic transport of potassium into the cytoplasm. This subunit binds the periplasmic potassium ions and delivers the ions to the membrane domain of KdpB through an intramembrane tunnel. The chain is Potassium-transporting ATPase potassium-binding subunit from Geotalea uraniireducens (strain Rf4) (Geobacter uraniireducens).